Consider the following 469-residue polypeptide: Coumaroyl-CoA:anthocyanidin 3-O-glucoside-6''-O-coumaroyltransferase 1 (469 aa).

N-acetylmethionine is present on methionine 1. Catalysis depends on proton acceptor residues histidine 173 and aspartate 410.

Belongs to the plant acyltransferase family. Highly expressed in flowers, leaves and roots. Lower levels of expression in stems and siliques.

Its function is as follows. Involved in the acylation of the 6'' position of the 3-O-glucose residue of anthocyanin. Also able to use flavonol 3-glucosides as the acyl acceptor. The chain is Coumaroyl-CoA:anthocyanidin 3-O-glucoside-6''-O-coumaroyltransferase 1 (3AT1) from Arabidopsis thaliana (Mouse-ear cress).